The primary structure comprises 348 residues: Protein RecA (348 aa).

66–73 (GPESSGKT) provides a ligand contact to ATP.

This sequence belongs to the RecA family.

The protein localises to the cytoplasm. In terms of biological role, can catalyze the hydrolysis of ATP in the presence of single-stranded DNA, the ATP-dependent uptake of single-stranded DNA by duplex DNA, and the ATP-dependent hybridization of homologous single-stranded DNAs. It interacts with LexA causing its activation and leading to its autocatalytic cleavage. The chain is Protein RecA from Neisseria meningitidis serogroup C / serotype 2a (strain ATCC 700532 / DSM 15464 / FAM18).